Consider the following 307-residue polypeptide: uncharacterized protein (307 aa).

This is an uncharacterized protein from Caenorhabditis elegans.